Reading from the N-terminus, the 225-residue chain is UPF0758 protein Spea_3837 (225 aa).

One can recognise an MPN domain in the interval 102 to 224; it reads ILSDPDLTRD…IVSFAERGWI (123 aa). Residues His173, His175, and Asp186 each coordinate Zn(2+). A JAMM motif motif is present at residues 173–186; sequence HNHPSGIAEPSTAD.

It belongs to the UPF0758 family.

This Shewanella pealeana (strain ATCC 700345 / ANG-SQ1) protein is UPF0758 protein Spea_3837.